The primary structure comprises 157 residues: SsrA-binding protein (157 aa).

Belongs to the SmpB family.

It localises to the cytoplasm. Its function is as follows. Required for rescue of stalled ribosomes mediated by trans-translation. Binds to transfer-messenger RNA (tmRNA), required for stable association of tmRNA with ribosomes. tmRNA and SmpB together mimic tRNA shape, replacing the anticodon stem-loop with SmpB. tmRNA is encoded by the ssrA gene; the 2 termini fold to resemble tRNA(Ala) and it encodes a 'tag peptide', a short internal open reading frame. During trans-translation Ala-aminoacylated tmRNA acts like a tRNA, entering the A-site of stalled ribosomes, displacing the stalled mRNA. The ribosome then switches to translate the ORF on the tmRNA; the nascent peptide is terminated with the 'tag peptide' encoded by the tmRNA and targeted for degradation. The ribosome is freed to recommence translation, which seems to be the essential function of trans-translation. This is SsrA-binding protein from Clostridium kluyveri (strain NBRC 12016).